The sequence spans 443 residues: Tol-Pal system protein TolB (443 aa).

An N-terminal signal peptide occupies residues 1-31 (MTRLAKGKWRSTLGAMMALAVMVAAIPQARA). The span at 423-432 (NERQISTPTE) shows a compositional bias: polar residues. Positions 423–443 (NERQISTPTEASDPAWSPLLP) are disordered.

The protein belongs to the TolB family. In terms of assembly, the Tol-Pal system is composed of five core proteins: the inner membrane proteins TolA, TolQ and TolR, the periplasmic protein TolB and the outer membrane protein Pal. They form a network linking the inner and outer membranes and the peptidoglycan layer.

It localises to the periplasm. Its function is as follows. Part of the Tol-Pal system, which plays a role in outer membrane invagination during cell division and is important for maintaining outer membrane integrity. This chain is Tol-Pal system protein TolB, found in Rhodospirillum rubrum (strain ATCC 11170 / ATH 1.1.1 / DSM 467 / LMG 4362 / NCIMB 8255 / S1).